Consider the following 172-residue polypeptide: Protein YdeJ (172 aa).

The protein belongs to the CinA family.

Does not have nicotinamide-nucleotide (NMN) amidohydrolase activity. The polypeptide is Protein YdeJ (ydeJ) (Escherichia coli (strain K12)).